The sequence spans 251 residues: Small ribosomal subunit protein uS3 (251 aa).

In terms of domain architecture, KH type-2 spans 39 to 111 (IRELINNFSK…DVDLNILEVK (73 aa)).

It belongs to the universal ribosomal protein uS3 family. In terms of assembly, part of the 30S ribosomal subunit. Forms a tight complex with proteins S10 and S14.

Binds the lower part of the 30S subunit head. Binds mRNA in the 70S ribosome, positioning it for translation. The chain is Small ribosomal subunit protein uS3 from Phytoplasma sp. (strain STRAWB1).